Here is a 234-residue protein sequence, read N- to C-terminus: DNA repair and recombination protein RadB (234 aa).

Belongs to the eukaryotic RecA-like protein family. RadB subfamily.

In terms of biological role, involved in DNA repair and in homologous recombination. May regulate the cleavage reactions of the branch-structured DNA. Has a very weak ATPase activity that is not stimulated by DNA. Binds DNA but does not promote DNA strands exchange. This chain is DNA repair and recombination protein RadB, found in Methanobrevibacter smithii (strain ATCC 35061 / DSM 861 / OCM 144 / PS).